A 280-amino-acid polypeptide reads, in one-letter code: Dermonecrotic toxin LgSicTox-alphaIA1 (280 aa).

The active site involves His12. 2 residues coordinate Mg(2+): Glu32 and Asp34. His48 serves as the catalytic Nucleophile. A disulfide bridge links Cys52 with Cys58. Residue Asp92 coordinates Mg(2+).

The protein belongs to the arthropod phospholipase D family. Class I subfamily. The cofactor is Mg(2+). Expressed by the venom gland.

It localises to the secreted. It carries out the reaction an N-(acyl)-sphingosylphosphocholine = an N-(acyl)-sphingosyl-1,3-cyclic phosphate + choline. The catalysed reaction is an N-(acyl)-sphingosylphosphoethanolamine = an N-(acyl)-sphingosyl-1,3-cyclic phosphate + ethanolamine. The enzyme catalyses a 1-acyl-sn-glycero-3-phosphocholine = a 1-acyl-sn-glycero-2,3-cyclic phosphate + choline. It catalyses the reaction a 1-acyl-sn-glycero-3-phosphoethanolamine = a 1-acyl-sn-glycero-2,3-cyclic phosphate + ethanolamine. In terms of biological role, dermonecrotic toxins cleave the phosphodiester linkage between the phosphate and headgroup of certain phospholipids (sphingolipid and lysolipid substrates), forming an alcohol (often choline) and a cyclic phosphate. This toxin acts on sphingomyelin (SM). It may also act on ceramide phosphoethanolamine (CPE), lysophosphatidylcholine (LPC) and lysophosphatidylethanolamine (LPE), but not on lysophosphatidylserine (LPS), and lysophosphatidylglycerol (LPG). It acts by transphosphatidylation, releasing exclusively cyclic phosphate products as second products. Induces dermonecrosis, hemolysis, increased vascular permeability, edema, inflammatory response, and platelet aggregation. This chain is Dermonecrotic toxin LgSicTox-alphaIA1, found in Loxosceles gaucho (Spider).